A 463-amino-acid chain; its full sequence is L-seryl-tRNA(Sec) selenium transferase (463 aa).

Position 295 is an N6-(pyridoxal phosphate)lysine (Lys-295).

The protein belongs to the SelA family. In terms of assembly, homodecamer; pentamer of dimers. Binds only one seryl-tRNA(Sec) per dimer. Pyridoxal 5'-phosphate is required as a cofactor.

It is found in the cytoplasm. It carries out the reaction L-seryl-tRNA(Sec) + selenophosphate + H(+) = L-selenocysteinyl-tRNA(Sec) + phosphate. Its pathway is aminoacyl-tRNA biosynthesis; selenocysteinyl-tRNA(Sec) biosynthesis; selenocysteinyl-tRNA(Sec) from L-seryl-tRNA(Sec) (bacterial route): step 1/1. Converts seryl-tRNA(Sec) to selenocysteinyl-tRNA(Sec) required for selenoprotein biosynthesis. This is L-seryl-tRNA(Sec) selenium transferase from Salmonella typhimurium (strain LT2 / SGSC1412 / ATCC 700720).